Consider the following 970-residue polypeptide: Type III restriction-modification enzyme EcoP15I Res subunit (970 aa).

Positions 75 to 540 (AKSNIIDVSM…EVGRGLRLPV (466 aa)) are helicase-like domain. 4 residues coordinate AMP: Thr-91, Gly-122, Phe-126, and Asp-226. The interval 894–918 (TYSPDFAYVVKTAEGDYLNFIIETK) is endonuclease domain.

The protein belongs to the type III restriction-modification system Res protein family. In terms of assembly, a heterotetramer with stoichiometry Res(2)Mod(2). A heterotrimer with stoichiometry Res(1)Mod(2). Mg(2+) is required as a cofactor. Requires S-adenosyl-L-methionine as cofactor.

It catalyses the reaction Endonucleolytic cleavage of DNA to give specific double-stranded fragments with terminal 5'-phosphates.. In terms of biological role, a type III restriction enzyme that recognizes 2 inversely oriented double-stranded sequences 5'-CAGCAG-3' and cleaves DNA 25-27 base pairs downstream of one site. DNA restriction requires both the Res and Mod subunits. DNA topology affects its action; relaxed and negatively supercoiled DNA are digested but positively supercoiled DNA is not a good substrate. Interacts with DNA approximately one half-turn downstream of the recognition site. After binding to one recognition site undergoes random one-dimensional diffusion along DNA until it collides with a stationary enzyme bound to the second DNA site, which is when DNA cleavage occurs. This chain is Type III restriction-modification enzyme EcoP15I Res subunit, found in Escherichia coli.